Reading from the N-terminus, the 142-residue chain is MAKKVEAYIKLQVAAGAANPSPPVGPALGQHGVNIMEFCKAFNARTDSVEKGLPTPVVITVYSDRSFTFITKTPPAAVLLKKAAGVKSGSGRPNTEKVGTVTDAQVQEIAETKAADMTGADIEAMKRSIAGTARSMGLVVEG.

It belongs to the universal ribosomal protein uL11 family. In terms of assembly, part of the ribosomal stalk of the 50S ribosomal subunit. Interacts with L10 and the large rRNA to form the base of the stalk. L10 forms an elongated spine to which L12 dimers bind in a sequential fashion forming a multimeric L10(L12)X complex. Post-translationally, one or more lysine residues are methylated.

Functionally, forms part of the ribosomal stalk which helps the ribosome interact with GTP-bound translation factors. The protein is Large ribosomal subunit protein uL11 of Photobacterium profundum (strain SS9).